A 1009-amino-acid polypeptide reads, in one-letter code: Protein translocase subunit SecA (1009 aa).

ATP-binding positions include Q86, 104–108 (GEGKT), and D497. Disordered regions lie at residues 869 to 894 (AVPQ…GQQP) and 949 to 1009 (ERRP…RNAG). Composition is skewed to low complexity over residues 883 to 894 (PVPAATAPGQQP) and 953 to 973 (SGAA…AGAG). C990, C992, C1001, and H1002 together coordinate Zn(2+).

The protein belongs to the SecA family. As to quaternary structure, monomer and homodimer. Part of the essential Sec protein translocation apparatus which comprises SecA, SecYEG and auxiliary proteins SecDF. Other proteins may also be involved. It depends on Zn(2+) as a cofactor.

The protein localises to the cell membrane. The protein resides in the cytoplasm. It carries out the reaction ATP + H2O + cellular proteinSide 1 = ADP + phosphate + cellular proteinSide 2.. In terms of biological role, part of the Sec protein translocase complex. Interacts with the SecYEG preprotein conducting channel. Has a central role in coupling the hydrolysis of ATP to the transfer of proteins into and across the cell membrane, serving as an ATP-driven molecular motor driving the stepwise translocation of polypeptide chains across the membrane. The sequence is that of Protein translocase subunit SecA from Acidothermus cellulolyticus (strain ATCC 43068 / DSM 8971 / 11B).